Consider the following 565-residue polypeptide: Heme/hemopexin transporter protein HuxB (565 aa).

An N-terminal signal peptide occupies residues 1–26 (MKMRPRYSVIASAVSLGFVLSKSVMA). Residues 73–150 (FPLTQVQILD…GTVKILLLKG (78 aa)) form the POTRA domain.

This sequence belongs to the TPS (TC 1.B.20) family.

It localises to the cell outer membrane. Functionally, likely functions in the release of soluble HxuA from the cell. Probable member of a two partner secretion pathway (TPS) in which it mediates the secretion of HuxA. This chain is Heme/hemopexin transporter protein HuxB (hxuB), found in Haemophilus influenzae (strain 86-028NP).